The primary structure comprises 466 residues: Zinc finger protein ZIC 3 (466 aa).

Over residues 65 to 80 (DLSSGQSSAFTPQGSG) the composition is skewed to polar residues. The tract at residues 65–103 (DLSSGQSSAFTPQGSGYANALGHHHHHHHHHHASQVPTY) is disordered. Residues 86 to 97 (GHHHHHHHHHHA) are compositionally biased toward basic residues. Lys247 is covalently cross-linked (Glycyl lysine isopeptide (Lys-Gly) (interchain with G-Cter in SUMO2)). A C2H2-type 1; atypical zinc finger spans residues 250–285 (LSCKWIEEAQLSRPKKSCDRTFSTMHELVTHVTMEH). The C2H2-type 2; atypical zinc-finger motif lies at 294–321 (HVCYWEECPREGKSFKAKYKLVNHIRVH). 2 consecutive short sequence motifs (nuclear localization signal) follow at residues 296–321 (CYWEECPREGKSFKAKYKLVNHIRVH) and 329–351 (CPFPGCGKIFARSENLKIHKRTH). 3 consecutive C2H2-type zinc fingers follow at residues 327–351 (FPCPFPGCGKIFARSENLKIHKRTH), 357–381 (FKCEFEGCDRRFANSSDRKKHMHVH), and 387–409 (YICKVCDKSYTHPSSLRKHMKVH). The interval 403–466 (RKHMKVHESQ…LPPNFNEWYV (64 aa)) is disordered. Residues 411–427 (SQGSDSSPAASSGYESS) show a composition bias toward low complexity. The segment covering 434–454 (SANSKDTTKTPSAVQTSTSHN) has biased composition (polar residues).

It belongs to the GLI C2H2-type zinc-finger protein family. As to quaternary structure, interacts with KPNA1 and KPNA6. Interacts (via C2H2-type domains 3, 4 and 5) with GLI3; the interaction enhances its transcriptional activity. Interacts (via the C2H2-type domains 3, 4 and 5) with MDFIC (via the C2H2-type domains 3, 4 and 5); the interaction reduces its transcriptional activity. CNS. A high level expression is seen in the cerebellum.

It localises to the nucleus. Its subcellular location is the cytoplasm. In terms of biological role, acts as a transcriptional activator. Required in the earliest stages in both axial midline development and left-right (LR) asymmetry specification. Binds to the minimal GLI-consensus sequence 5'-GGGTGGTC-3'. The sequence is that of Zinc finger protein ZIC 3 (Zic3) from Mus musculus (Mouse).